Consider the following 414-residue polypeptide: Testis-specific Y-encoded-like protein 4 (414 aa).

Disordered regions lie at residues 1–129 (MSGL…AGQK) and 391–414 (PRRGIRGPPRQPVESARSFRFQSG). Positions 24–40 (ASGDPDRDQCQGLREET) are enriched in basic and acidic residues. The span at 101-112 (EAASAAEAADSS) shows a compositional bias: low complexity.

The protein belongs to the nucleosome assembly protein (NAP) family.

This is Testis-specific Y-encoded-like protein 4 (TSPYL4) from Homo sapiens (Human).